Consider the following 310-residue polypeptide: uncharacterized protein (310 aa).

The active site involves His239.

Belongs to the IUNH family.

Its subcellular location is the cytoplasm. The protein localises to the nucleus. This is an uncharacterized protein from Schizosaccharomyces pombe (strain 972 / ATCC 24843) (Fission yeast).